The chain runs to 492 residues: Catalase isozyme 2 (492 aa).

Residues H65 and N138 contribute to the active site. Y348 lines the heme pocket.

Belongs to the catalase family. As to quaternary structure, homotetramer. It depends on heme as a cofactor.

It is found in the peroxisome. It catalyses the reaction 2 H2O2 = O2 + 2 H2O. Occurs in almost all aerobically respiring organisms and serves to protect cells from the toxic effects of hydrogen peroxide. The protein is Catalase isozyme 2 (CAT2) of Nicotiana plumbaginifolia (Leadwort-leaved tobacco).